We begin with the raw amino-acid sequence, 117 residues long: Large ribosomal subunit protein bL20 (117 aa).

This sequence belongs to the bacterial ribosomal protein bL20 family.

In terms of biological role, binds directly to 23S ribosomal RNA and is necessary for the in vitro assembly process of the 50S ribosomal subunit. It is not involved in the protein synthesizing functions of that subunit. The polypeptide is Large ribosomal subunit protein bL20 (Mycoplasma mobile (strain ATCC 43663 / 163K / NCTC 11711) (Mesomycoplasma mobile)).